We begin with the raw amino-acid sequence, 402 residues long: MSVGMAAPHAPYACDPDRSRGRLVAEPPSRTRSPFRRDCDRVIHSTAFRRLKYKTQVFVFHEGDHYRTRLTHSLEVAQIARALARQLGLDEDLTETLALAHDLGHPPFGHAGERALDACLKEFGGFDHNAQALRVVAALEHRYPEFDGLNLTWESLEGIVKHNGPLTDRSGAPVGHYREHGIPVGIADYIKVYDLELWSFASLEAQVAAIADDIAYDAHDIDDGLRAGLFDLDDLKAMPLTAAIIAETSAHYPDLEDVRRGAELVRELISHLIGAVFAEAQKNLAATKPQSAQDVRQQSRALIAFPADVAEEEAAIKRFLYQHMYRHKRVMRVMGEAKQILFDLFAKYLKSPAELPPEWLTGAEADNEGDRARRIGNFIAGMTDRFALTEHQRLFDSTPDLR.

An HD domain is found at 69–217; that stretch reads RLTHSLEVAQ…AAIADDIAYD (149 aa).

Belongs to the dGTPase family. Type 2 subfamily.

In Bradyrhizobium diazoefficiens (strain JCM 10833 / BCRC 13528 / IAM 13628 / NBRC 14792 / USDA 110), this protein is Deoxyguanosinetriphosphate triphosphohydrolase-like protein.